Reading from the N-terminus, the 359-residue chain is Pyruvate dehydrogenase E1 component subunit beta, mitochondrial (359 aa).

A mitochondrion-targeting transit peptide spans 1–19 (MLGVIRNKTIRPSFSAFRF). Residue Glu82 participates in thiamine diphosphate binding. Residues Ile135, Ala183, Ile184, and Asp186 each coordinate K(+).

In terms of assembly, tetramer of 2 alpha and 2 beta subunits. The cofactor is thiamine diphosphate.

The protein resides in the mitochondrion matrix. The catalysed reaction is N(6)-[(R)-lipoyl]-L-lysyl-[protein] + pyruvate + H(+) = N(6)-[(R)-S(8)-acetyldihydrolipoyl]-L-lysyl-[protein] + CO2. The pyruvate dehydrogenase complex catalyzes the overall conversion of pyruvate to acetyl-CoA and CO(2). It contains multiple copies of three enzymatic components: pyruvate dehydrogenase (E1), dihydrolipoamide acetyltransferase (E2) and lipoamide dehydrogenase (E3). The chain is Pyruvate dehydrogenase E1 component subunit beta, mitochondrial from Pisum sativum (Garden pea).